Here is a 150-residue protein sequence, read N- to C-terminus: MGVQPPNFSWVLPGRLAGLALPRLPAHYQFLLDQGVRHLVSLTERGPPHSDSCPGLTLHRMRIPDFCPPSPEQIDQFVKIVDEANARGEAVGVHCALGFGRTGTMLACYLVKERALAAGDAIAEIRRLRPGSIETYEQEKAVFQFYQRTK.

Positions 7–150 (NFSWVLPGRL…AVFQFYQRTK (144 aa)) constitute a Tyrosine-protein phosphatase domain. Cys-95 acts as the Phosphocysteine intermediate in catalysis.

Belongs to the protein-tyrosine phosphatase family. Non-receptor class dual specificity subfamily. As to expression, widely expressed.

The protein resides in the cytoplasm. Its subcellular location is the cytosol. The protein localises to the nucleus. The enzyme catalyses O-phospho-L-tyrosyl-[protein] + H2O = L-tyrosyl-[protein] + phosphate. The catalysed reaction is O-phospho-L-seryl-[protein] + H2O = L-seryl-[protein] + phosphate. It catalyses the reaction O-phospho-L-threonyl-[protein] + H2O = L-threonyl-[protein] + phosphate. In terms of biological role, protein phosphatase that mediates dephosphorylation of proteins phosphorylated on Tyr and Ser/Thr residues. In vitro, it can dephosphorylate p44-ERK1 (MAPK3) but not p54 SAPK-beta (MAPK10) in vitro. Able to enhance activation of JNK and p38 (MAPK14). The chain is Dual specificity protein phosphatase 23 (Dusp23) from Mus musculus (Mouse).